The following is a 560-amino-acid chain: MQSQKPWLAEYPNDIPHELPLPNKTLQSILTDSAARFPDKTAISFYGKKLTFHDILTDALKLAAFLQCNGLQKGDRVAVMLPNCPQTVISYYGVLFAGGIVVQTNPLYTEHELEYQLRDAQVSVIITLDLLFPKAIKMKTLSIVDQILITSVKDYLPFPKNILYPLTQKQKVHIDFDKTANIHTFASCMKQEKTELLTIPKIDPEHDIAVLQYTGGTTGAPKGVMLTHQNILANTEMCAAWMYDVKEGAEKVLGIVPFFHVYGLTAVMNYSIKLGFEMILLPKFDPLETLKIIDKHKPTLFPGAPTIYIGLLHHPELQHYDLSSIKSCLSGSAALPVEVKQKFEKVTGGKLVEGYGLSEASPVTHANFIWGKNKPGSIGCPWPSTDAAIYSEETGELAAPYEHGEIIVKGPQVMKGYWNKPEETAAVLRDGWLFTGDMGYMDEEGFFYIADRKKDIIIAGGYNIYPREVEEALYEHEAIQEIVVAGVPDSYRGETVKAFVVLKKGAKADTEELDAFARSRLAPYKVPKAYEFRKELPKTAVGKILRRRLLEEETENHHIK.

This sequence belongs to the ATP-dependent AMP-binding enzyme family.

It carries out the reaction a long-chain fatty acid + ATP + CoA = a long-chain fatty acyl-CoA + AMP + diphosphate. This Bacillus subtilis (strain 168) protein is Long-chain-fatty-acid--CoA ligase (lcfA).